Reading from the N-terminus, the 139-residue chain is Holo-[acyl-carrier-protein] synthase (139 aa).

Asp8 and Glu57 together coordinate Mg(2+).

The protein belongs to the P-Pant transferase superfamily. AcpS family. The cofactor is Mg(2+).

It is found in the cytoplasm. The enzyme catalyses apo-[ACP] + CoA = holo-[ACP] + adenosine 3',5'-bisphosphate + H(+). Its function is as follows. Transfers the 4'-phosphopantetheine moiety from coenzyme A to a Ser of acyl-carrier-protein. The chain is Holo-[acyl-carrier-protein] synthase from Dinoroseobacter shibae (strain DSM 16493 / NCIMB 14021 / DFL 12).